The sequence spans 208 residues: Uracil phosphoribosyltransferase (208 aa).

Residues R78, R103, and 130–138 (DPMLATGGS) contribute to the 5-phospho-alpha-D-ribose 1-diphosphate site. Uracil is bound by residues I193 and 198–200 (GDA). A 5-phospho-alpha-D-ribose 1-diphosphate-binding site is contributed by D199.

It belongs to the UPRTase family. It depends on Mg(2+) as a cofactor.

It catalyses the reaction UMP + diphosphate = 5-phospho-alpha-D-ribose 1-diphosphate + uracil. It functions in the pathway pyrimidine metabolism; UMP biosynthesis via salvage pathway; UMP from uracil: step 1/1. With respect to regulation, allosterically activated by GTP. Its function is as follows. Catalyzes the conversion of uracil and 5-phospho-alpha-D-ribose 1-diphosphate (PRPP) to UMP and diphosphate. This Shewanella sediminis (strain HAW-EB3) protein is Uracil phosphoribosyltransferase.